Here is a 283-residue protein sequence, read N- to C-terminus: Acetylglutamate kinase (283 aa).

Substrate contacts are provided by residues 63-64 (GG), Arg-85, and Asn-178.

It belongs to the acetylglutamate kinase family. ArgB subfamily.

Its subcellular location is the cytoplasm. The catalysed reaction is N-acetyl-L-glutamate + ATP = N-acetyl-L-glutamyl 5-phosphate + ADP. It functions in the pathway amino-acid biosynthesis; L-arginine biosynthesis; N(2)-acetyl-L-ornithine from L-glutamate: step 2/4. Its function is as follows. Catalyzes the ATP-dependent phosphorylation of N-acetyl-L-glutamate. The protein is Acetylglutamate kinase of Prochlorococcus marinus (strain AS9601).